The sequence spans 372 residues: Glutamate 5-kinase (372 aa).

Residue Lys-14 coordinates ATP. Substrate-binding residues include Ser-54, Asp-141, and Asn-153. 173-174 (TD) lines the ATP pocket. The region spanning 280-358 (RGTLVLDEGA…DAIVGVLGYM (79 aa)) is the PUA domain.

Belongs to the glutamate 5-kinase family.

It localises to the cytoplasm. It carries out the reaction L-glutamate + ATP = L-glutamyl 5-phosphate + ADP. The protein operates within amino-acid biosynthesis; L-proline biosynthesis; L-glutamate 5-semialdehyde from L-glutamate: step 1/2. Functionally, catalyzes the transfer of a phosphate group to glutamate to form L-glutamate 5-phosphate. The polypeptide is Glutamate 5-kinase (Pseudomonas fluorescens (strain ATCC BAA-477 / NRRL B-23932 / Pf-5)).